The sequence spans 236 residues: Small ribosomal subunit protein uS2c (236 aa).

This sequence belongs to the universal ribosomal protein uS2 family.

The protein resides in the plastid. Its subcellular location is the chloroplast. The protein is Small ribosomal subunit protein uS2c (rps2) of Pisum sativum (Garden pea).